Reading from the N-terminus, the 334-residue chain is Formamidase (334 aa).

Residues 14–260 enclose the CN hydrolase domain; it reads FLVAAIQFPV…WEIVTGEIYP (247 aa). The active-site Proton acceptor is Glu-60. Residue Lys-133 is the Proton donor of the active site. The Nucleophile role is filled by Cys-166.

It belongs to the carbon-nitrogen hydrolase superfamily. Aliphatic amidase family.

It carries out the reaction formamide + H2O = formate + NH4(+). In terms of biological role, is an aliphatic amidase with a restricted substrate specificity, as it only hydrolyzes formamide. This is Formamidase from Helicobacter pylori (strain HPAG1).